A 266-amino-acid chain; its full sequence is Glucosamine-6-phosphate deaminase (266 aa).

Asp72 serves as the catalytic Proton acceptor; for enolization step. Catalysis depends on Asp141, which acts as the For ring-opening step. Catalysis depends on His143, which acts as the Proton acceptor; for ring-opening step. The active-site For ring-opening step is Glu148.

The protein belongs to the glucosamine/galactosamine-6-phosphate isomerase family. NagB subfamily. As to quaternary structure, homohexamer; trimer of disulfide-linked dimers.

The catalysed reaction is alpha-D-glucosamine 6-phosphate + H2O = beta-D-fructose 6-phosphate + NH4(+). The protein operates within amino-sugar metabolism; N-acetylneuraminate degradation; D-fructose 6-phosphate from N-acetylneuraminate: step 5/5. With respect to regulation, allosterically activated by N-acetylglucosamine 6-phosphate (GlcNAc6P). Its function is as follows. Catalyzes the reversible isomerization-deamination of glucosamine 6-phosphate (GlcN6P) to form fructose 6-phosphate (Fru6P) and ammonium ion. In Shigella flexneri serotype 5b (strain 8401), this protein is Glucosamine-6-phosphate deaminase.